The following is a 369-amino-acid chain: Anhydro-N-acetylmuramic acid kinase (369 aa).

Position 12–19 (12–19 (GTSMDGVD)) interacts with ATP.

It belongs to the anhydro-N-acetylmuramic acid kinase family.

The catalysed reaction is 1,6-anhydro-N-acetyl-beta-muramate + ATP + H2O = N-acetyl-D-muramate 6-phosphate + ADP + H(+). It participates in amino-sugar metabolism; 1,6-anhydro-N-acetylmuramate degradation. It functions in the pathway cell wall biogenesis; peptidoglycan recycling. Catalyzes the specific phosphorylation of 1,6-anhydro-N-acetylmuramic acid (anhMurNAc) with the simultaneous cleavage of the 1,6-anhydro ring, generating MurNAc-6-P. Is required for the utilization of anhMurNAc either imported from the medium or derived from its own cell wall murein, and thus plays a role in cell wall recycling. This is Anhydro-N-acetylmuramic acid kinase from Shewanella sp. (strain ANA-3).